We begin with the raw amino-acid sequence, 956 residues long: MAM domain-containing glycosylphosphatidylinositol anchor protein 1 (956 aa).

Positions 1–18 (MEVTCLLLLALIPFHCRG) are cleaved as a signal peptide. Ig-like domains lie at 24 to 123 (PAQA…KSIR) and 132 to 230 (PVLT…KAIT). An N-linked (GlcNAc...) asparagine glycan is attached at asparagine 42. Disulfide bonds link cysteine 60/cysteine 108 and cysteine 157/cysteine 214. N-linked (GlcNAc...) asparagine glycans are attached at residues asparagine 235, asparagine 247, asparagine 257, and asparagine 307. 4 Ig-like domains span residues 240–323 (PALK…KTVN), 338–432 (PDMI…IEVN), 440–532 (PTIS…AQVQ), and 539–650 (PEVE…PTRS). 2 disulfides stabilise this stretch: cysteine 262–cysteine 308 and cysteine 357–cysteine 415. N-linked (GlcNAc...) asparagine glycosylation is present at asparagine 432. Cystine bridges form between cysteine 463-cysteine 514 and cysteine 560-cysteine 616. The Fibronectin type-III domain maps to 627–744 (CLFQVSAKAY…SRIIHYTEPI (118 aa)). Residues 752–919 (NTCHFEDEKI…VTLKKGECPR (168 aa)) enclose the MAM domain. The segment covering 780–789 (LTQNPKRSPN) has biased composition (polar residues). The interval 780–799 (LTQNPKRSPNTGPPTDISGT) is disordered. Residue serine 933 is the site of GPI-anchor amidated serine attachment. A propeptide spans 934-956 (GAPRLSSLQLWGSMAIFLLALQR) (removed in mature form).

Interacts heterophilically through its MAM domain with proteins in axon-rich regions and through its Ig-like domains with proteins in differentiating muscle. Interacts (through the Ig-like domains) with NLGN2. In terms of tissue distribution, expressed by neurons in layers 2 and 3 of the cortex during their migration and settling in the cortical plate. Also found in layers 4 and 6a. From 9.5 dpc-13.5 dpc, detected in the marginal zone of the developing cortex. At 16.5 dpc, modest expression is found in the intermediate zone. At postnatal day 1, evident in the superficial cortical plate. By postnatal day 7, expression is limited to layers 2 and 3 throughout most of the cortex.

The protein resides in the cell membrane. Functionally, required for radial migration of cortical neurons in the superficial layer of the neocortex. Plays a role in the formation or maintenance of inhibitory synapses. May function by inhibiting the activity of NLGN2. This is MAM domain-containing glycosylphosphatidylinositol anchor protein 1 from Mus musculus (Mouse).